Reading from the N-terminus, the 236-residue chain is Phosphoribosylaminoimidazole-succinocarboxamide synthase (236 aa).

It belongs to the SAICAR synthetase family.

The enzyme catalyses 5-amino-1-(5-phospho-D-ribosyl)imidazole-4-carboxylate + L-aspartate + ATP = (2S)-2-[5-amino-1-(5-phospho-beta-D-ribosyl)imidazole-4-carboxamido]succinate + ADP + phosphate + 2 H(+). It participates in purine metabolism; IMP biosynthesis via de novo pathway; 5-amino-1-(5-phospho-D-ribosyl)imidazole-4-carboxamide from 5-amino-1-(5-phospho-D-ribosyl)imidazole-4-carboxylate: step 1/2. This chain is Phosphoribosylaminoimidazole-succinocarboxamide synthase, found in Lysinibacillus sphaericus (strain C3-41).